Here is a 72-residue protein sequence, read N- to C-terminus: UPF0346 protein EF_1680 (72 aa).

Belongs to the UPF0346 family.

This Enterococcus faecalis (strain ATCC 700802 / V583) protein is UPF0346 protein EF_1680.